A 456-amino-acid polypeptide reads, in one-letter code: Hydroxyproline dehydrogenase (456 aa).

Lys-310 and Lys-320 each carry N6-acetyllysine.

The protein belongs to the proline oxidase family. It depends on FAD as a cofactor.

The catalysed reaction is trans-4-hydroxy-L-proline + a quinone = (3R,5S)-1-pyrroline-3-hydroxy-5-carboxylate + a quinol + H(+). It catalyses the reaction L-proline + a quinone = (S)-1-pyrroline-5-carboxylate + a quinol + H(+). Its function is as follows. Dehydrogenase that converts trans-4-L-hydroxyproline to delta-1-pyrroline-3-hydroxy-5-carboxylate (Hyp) using ubiquinone-10 as the terminal electron acceptor. Can also use proline as a substrate but with a very much lower efficiency. Does not react with other diastereomers of Hyp: trans-4-D-hydroxyproline and cis-4-L-hydroxyproline. Ubiquininone analogs such as menadione, duroquinone and ubiquinone-1 react more efficiently than oxygen as the terminal electron acceptor during catalysis. The protein is Hydroxyproline dehydrogenase of Mus musculus (Mouse).